Consider the following 380-residue polypeptide: 5-amino-6-(D-ribitylamino)uracil--L-tyrosine 4-hydroxyphenyl transferase (380 aa).

The Radical SAM core domain maps to 56–303; it reads VTYIINRNIN…GAVARIYLGN (248 aa). Positions 70, 74, and 77 each coordinate [4Fe-4S] cluster.

The protein belongs to the radical SAM superfamily. CofH family. As to quaternary structure, consists of two subunits, CofG and CofH. Requires [4Fe-4S] cluster as cofactor.

The enzyme catalyses 5-amino-6-(D-ribitylamino)uracil + L-tyrosine + S-adenosyl-L-methionine = 5-amino-5-(4-hydroxybenzyl)-6-(D-ribitylimino)-5,6-dihydrouracil + 2-iminoacetate + 5'-deoxyadenosine + L-methionine + H(+). It participates in cofactor biosynthesis; coenzyme F0 biosynthesis. In terms of biological role, catalyzes the radical-mediated synthesis of 5-amino-5-(4-hydroxybenzyl)-6-(D-ribitylimino)-5,6-dihydrouracil from 5-amino-6-(D-ribitylamino)uracil and L-tyrosine. The chain is 5-amino-6-(D-ribitylamino)uracil--L-tyrosine 4-hydroxyphenyl transferase from Nostoc punctiforme (strain ATCC 29133 / PCC 73102).